The sequence spans 179 residues: Large ribosomal subunit protein uL10 (179 aa).

This sequence belongs to the universal ribosomal protein uL10 family. As to quaternary structure, part of the ribosomal stalk of the 50S ribosomal subunit. The N-terminus interacts with L11 and the large rRNA to form the base of the stalk. The C-terminus forms an elongated spine to which L12 dimers bind in a sequential fashion forming a multimeric L10(L12)X complex.

Its function is as follows. Forms part of the ribosomal stalk, playing a central role in the interaction of the ribosome with GTP-bound translation factors. The sequence is that of Large ribosomal subunit protein uL10 from Symbiobacterium thermophilum (strain DSM 24528 / JCM 14929 / IAM 14863 / T).